A 146-amino-acid polypeptide reads, in one-letter code: Envelope protein OPG155 (146 aa).

A helical; Signal-anchor for type II membrane protein transmembrane segment spans residues 1–21 (MNSLSIFFIVVATAAVCLLFI). Over 22-146 (QGYSIYENYG…AECQFLKSVL (125 aa)) the chain is Virion surface.

The protein belongs to the orthopoxvirus OPG155 protein family. Part of a stable entry-fusion complex (EFC) which is at least composed of proteins OPG143, OPG147, OPG155, OPG086, OPG094, OPG107, OPG104, and OPG099. Formation of the viral membrane is necessary for the assembly of the complex. Interacts directly with protein OPG107. Contains two intramolecular disulfide bonds. They are created by the viral disulfide bond formation pathway, a poxvirus-specific pathway that operates on the cytoplasmic side of the MV membranes.

Its subcellular location is the virion membrane. In terms of biological role, envelope protein required for virus entry into host cell and for cell-cell fusion (syncytium formation). The polypeptide is Envelope protein OPG155 (OPG155) (Cowpox virus (strain GRI-90 / Grishak) (CPV)).